We begin with the raw amino-acid sequence, 576 residues long: Apolipoprotein N-acyltransferase 1 (576 aa).

7 helical membrane passes run Leu15–Phe35, Gly38–Trp58, Ala60–Pro80, Phe92–Phe112, Tyr128–Phe148, Ile168–Leu188, and Ile204–Ile224. Residues Leu236–Leu538 form the CN hydrolase domain. The active-site Proton acceptor is the Glu285. Lys355 is an active-site residue. The active-site Nucleophile is the Cys446. Residues Phe549–Val569 form a helical membrane-spanning segment.

The protein belongs to the CN hydrolase family. Apolipoprotein N-acyltransferase subfamily.

The protein localises to the cell inner membrane. The enzyme catalyses N-terminal S-1,2-diacyl-sn-glyceryl-L-cysteinyl-[lipoprotein] + a glycerophospholipid = N-acyl-S-1,2-diacyl-sn-glyceryl-L-cysteinyl-[lipoprotein] + a 2-acyl-sn-glycero-3-phospholipid + H(+). It functions in the pathway protein modification; lipoprotein biosynthesis (N-acyl transfer). Its function is as follows. Catalyzes the phospholipid dependent N-acylation of the N-terminal cysteine of apolipoprotein, the last step in lipoprotein maturation. This Leptospira interrogans serogroup Icterohaemorrhagiae serovar Lai (strain 56601) protein is Apolipoprotein N-acyltransferase 1.